The following is a 481-amino-acid chain: UDP-N-acetylmuramate--L-alanine ligase (481 aa).

Residue 122 to 128 (GVHGKTT) coordinates ATP.

Belongs to the MurCDEF family.

The protein resides in the cytoplasm. The enzyme catalyses UDP-N-acetyl-alpha-D-muramate + L-alanine + ATP = UDP-N-acetyl-alpha-D-muramoyl-L-alanine + ADP + phosphate + H(+). The protein operates within cell wall biogenesis; peptidoglycan biosynthesis. Cell wall formation. The sequence is that of UDP-N-acetylmuramate--L-alanine ligase from Treponema pallidum (strain Nichols).